Here is a 369-residue protein sequence, read N- to C-terminus: Probable dual-specificity RNA methyltransferase RlmN (369 aa).

The active-site Proton acceptor is the glutamate 106. Positions 118-354 (EARRLTVCVS…VTVRRSRGQD (237 aa)) constitute a Radical SAM core domain. The cysteines at positions 125 and 359 are disulfide-linked. [4Fe-4S] cluster contacts are provided by cysteine 132, cysteine 136, and cysteine 139. S-adenosyl-L-methionine contacts are provided by residues 183–184 (GE), serine 215, 238–240 (SLH), and asparagine 316. Residue cysteine 359 is the S-methylcysteine intermediate of the active site.

This sequence belongs to the radical SAM superfamily. RlmN family. It depends on [4Fe-4S] cluster as a cofactor.

It is found in the cytoplasm. The enzyme catalyses adenosine(2503) in 23S rRNA + 2 reduced [2Fe-2S]-[ferredoxin] + 2 S-adenosyl-L-methionine = 2-methyladenosine(2503) in 23S rRNA + 5'-deoxyadenosine + L-methionine + 2 oxidized [2Fe-2S]-[ferredoxin] + S-adenosyl-L-homocysteine. The catalysed reaction is adenosine(37) in tRNA + 2 reduced [2Fe-2S]-[ferredoxin] + 2 S-adenosyl-L-methionine = 2-methyladenosine(37) in tRNA + 5'-deoxyadenosine + L-methionine + 2 oxidized [2Fe-2S]-[ferredoxin] + S-adenosyl-L-homocysteine. Specifically methylates position 2 of adenine 2503 in 23S rRNA and position 2 of adenine 37 in tRNAs. The polypeptide is Probable dual-specificity RNA methyltransferase RlmN (Salinibacter ruber (strain DSM 13855 / M31)).